Here is a 170-residue protein sequence, read N- to C-terminus: Photosystem II extrinsic protein V (170 aa).

An N-terminal signal peptide occupies residues 1–34; it reads MNKILGIDPLKKFIFGISAFVLLFWQLNVGAANA. Heme c-binding residues include Cys-70, Cys-73, His-74, and His-125.

This sequence belongs to the cytochrome c family. PsbV subfamily. PSII is composed of 1 copy each of membrane proteins PsbA, PsbB, PsbC, PsbD, PsbE, PsbF, PsbH, PsbI, PsbJ, PsbK, PsbL, PsbM, PsbT, PsbX, PsbY, PsbZ, Psb30/Ycf12, peripheral proteins PsbO, CyanoQ (PsbQ), PsbU, PsbV and a large number of cofactors. It forms dimeric complexes. Requires heme c as cofactor.

The protein resides in the cellular thylakoid membrane. In terms of biological role, one of the extrinsic, lumenal subunits of photosystem II (PSII). PSII is a light-driven water plastoquinone oxidoreductase, using light energy to abstract electrons from H(2)O, generating a proton gradient subsequently used for ATP formation. The extrinsic proteins stabilize the structure of photosystem II oxygen-evolving complex (OEC), the ion environment of oxygen evolution and protect the OEC against heat-induced inactivation. Low-potential cytochrome c that plays a role in the OEC of PSII. The polypeptide is Photosystem II extrinsic protein V (Picosynechococcus sp. (strain ATCC 27264 / PCC 7002 / PR-6) (Agmenellum quadruplicatum)).